The chain runs to 338 residues: Uroporphyrinogen decarboxylase (338 aa).

Residues 27–31 (RQAGR), Asp77, Tyr151, Ser203, and His317 each bind substrate.

This sequence belongs to the uroporphyrinogen decarboxylase family. As to quaternary structure, homodimer.

It localises to the cytoplasm. It carries out the reaction uroporphyrinogen III + 4 H(+) = coproporphyrinogen III + 4 CO2. It participates in porphyrin-containing compound metabolism; protoporphyrin-IX biosynthesis; coproporphyrinogen-III from 5-aminolevulinate: step 4/4. Functionally, catalyzes the decarboxylation of four acetate groups of uroporphyrinogen-III to yield coproporphyrinogen-III. The chain is Uroporphyrinogen decarboxylase from Wolbachia pipientis wMel.